The following is a 201-amino-acid chain: Glutathione peroxidase 1 (201 aa).

At Ser32 the chain carries Phosphoserine. The active site involves Sec47. Sec47 is a non-standard amino acid (selenocysteine). An N6-acetyllysine; alternate mark is found at Lys86, Lys112, and Lys146. An N6-succinyllysine; alternate mark is found at Lys86, Lys112, and Lys146. A phosphoserine mark is found at Ser195 and Ser199.

Belongs to the glutathione peroxidase family. As to quaternary structure, homotetramer. Interacts with MIEN1. During periods of oxidative stress, Sec-47 may react with a superoxide radical, irreversibly lose hydroselenide and be converted to dehydroalanine.

It localises to the cytoplasm. It catalyses the reaction 2 glutathione + H2O2 = glutathione disulfide + 2 H2O. It carries out the reaction (12S)-hydroperoxy-(5Z,8Z,10E,14Z)-eicosatetraenoate + 2 glutathione = (12S)-hydroxy-(5Z,8Z,10E,14Z)-eicosatetraenoate + glutathione disulfide + H2O. Functionally, protects the hemoglobin in erythrocytes from oxidative breakdown. In platelets, plays a crucial role of glutathione peroxidase in the arachidonic acid metabolism. The sequence is that of Glutathione peroxidase 1 (GPX1) from Hylobates lar (Lar gibbon).